The following is a 345-amino-acid chain: Nuclear distribution protein nudE-like 1 (345 aa).

The stretch at 28-190 forms a coiled coil; that stretch reads QSFQEARDEL…LAVRERQQEV (163 aa). Residues 56-166 form a self-association region; the sequence is VQAEQRNRDL…LDEKESLLVS (111 aa). The interaction with KATNB1 stretch occupies residues 64–189; sequence DLQADNQRLK…ELAVRERQQE (126 aa). The tract at residues 114–133 is required for interaction with PAFAH1B1; sequence YVRELEQANDDLERAKRATI. The interaction with CENPF stretch occupies residues 175–345; it reads RDLRQELAVR…SAPGMLPLSV (171 aa). Positions 189-256 are interaction with YWHAE; that stretch reads EVTRKSAPSS…SARISALNIV (68 aa). Positions 191 to 345 are interaction with NEFL; it reads TRKSAPSSPT…SAPGMLPLSV (155 aa). The tract at residues 195-256 is interaction with KATNA1; sequence APSSPTLDCE…SARISALNIV (62 aa). The residue at position 215 (Ser-215) is a Phosphoserine. The disordered stretch occupies residues 217–240; it reads PATPVGKGTENSFPSPKAIPNGFG. Thr-219 is subject to Phosphothreonine. Phosphoserine is present on Ser-231. Positions 241–280 are interaction with DISC1; sequence TSPLTPSARISALNIVGDLLRKVGALESKLAACRNFAKDQ. Ser-242 carries the post-translational modification Phosphoserine; by CDK1. Thr-245 carries the phosphothreonine; by CDK1 and MAPK1 modification. Residues 256 to 291 form a required for localization to the centrosome and interaction with dynein, dynactin, tubulin gamma, PCM1 and PCNT region; sequence VGDLLRKVGALESKLAACRNFAKDQASRKSYVPGSV. Cys-273 carries the S-palmitoyl cysteine; by ZDHHC2, ZDHHC3 and ZDHHC7 lipid modification. The disordered stretch occupies residues 314–345; sequence KGAVNGFDPAPPPPGLGSSRPSSAPGMLPLSV. Residues 329 to 339 show a composition bias toward low complexity; the sequence is LGSSRPSSAPG. Ser-344 is modified (phosphoserine).

The protein belongs to the nudE family. In terms of assembly, interacts with PLEKHM1 (via N- and C-terminus). Interacts with dynactin, PCM1 and PCNT. Interacts (via C-terminus) with CENPF. Self-associates. Interacts with DISC1, dynein, tubulin gamma, KATNA1, KATNB1, microtubules, PAFAHB1 and YWHAE. Interacts directly with NEFL and indirectly with NEFH. Interacts with ZNF365. Interacts with GTP-bound RAB9A; the interaction may lead to RAB9A-dynein motor tethering. Post-translationally, phosphorylated by CDK1 and MAPK1. Phosphorylated in mitosis. Phosphorylated by CDK5. Phosphorylation by CDK5 promotes interaction with KATNA1 and YWHAE. Palmitoylation at Cys-273 reduces affinity for dynein. As to expression, expressed in brain, liver, lung and testis (at protein level). Expressed in brain, epididymis, eye, heart, kidney, large intestine, liver, ovary, pancreas, prostate, skeletal muscle, smooth muscle, spleen, submaxillary gland, testis, thymus and thyroid. Within the brain expression is pronounced in the cortex, hippocampus, olfactory bulb, striatum, thalamic and hypothalamic structures and in the molecular layer of the cerebellum. Largely excluded from cortical progenitor cells which express NDE1.

It localises to the cytoplasm. The protein localises to the cytoskeleton. Its subcellular location is the microtubule organizing center. It is found in the centrosome. The protein resides in the chromosome. It localises to the centromere. The protein localises to the kinetochore. Its subcellular location is the spindle. Required for organization of the cellular microtubule array and microtubule anchoring at the centrosome. May regulate microtubule organization at least in part by targeting the microtubule severing protein KATNA1 to the centrosome. Also positively regulates the activity of the minus-end directed microtubule motor protein dynein. May enhance dynein-mediated microtubule sliding by targeting dynein to the microtubule plus ends. Required for several dynein- and microtubule-dependent processes such as the maintenance of Golgi integrity, the centripetal motion of secretory vesicles and the coupling of the nucleus and centrosome. Also required during brain development for the migration of newly formed neurons from the ventricular/subventricular zone toward the cortical plate. Plays a role, together with DISC1, in the regulation of neurite outgrowth. Required for mitosis in some cell types but appears to be dispensible for mitosis in cortical neuronal progenitors, which instead requires NDE1. Facilitates the polymerization of neurofilaments from the individual subunits NEFH and NEFL. Positively regulates lysosome peripheral distribution and ruffled border formation in osteoclasts. Plays a role, together with DISC1, in the regulation of neurite outgrowth. May act as a RAB9A/B effector that tethers RAB9-associated late endosomes to the dynein motor for their retrograde transport to the trans-Golgi network. The protein is Nuclear distribution protein nudE-like 1 of Mus musculus (Mouse).